Here is a 1436-residue protein sequence, read N- to C-terminus: tRNA (guanosine(18)-2'-O)-methyltransferase (1436 aa).

S-adenosyl-L-methionine is bound by residues 1365 to 1367, Gly1389, and 1409 to 1418; these read LEQ and IQQFGVIRSM.

Belongs to the class IV-like SAM-binding methyltransferase superfamily. RNA methyltransferase TrmH family.

The protein resides in the cytoplasm. It catalyses the reaction guanosine(18) in tRNA + S-adenosyl-L-methionine = 2'-O-methylguanosine(18) in tRNA + S-adenosyl-L-homocysteine + H(+). Functionally, S-adenosyl-L-methionine-dependent 2'-O-ribose methyltransferase that catalyzes the formation of 2'-O-methylguanosine at position 18 (Gm18) in various tRNAs. This is tRNA (guanosine(18)-2'-O)-methyltransferase from Saccharomyces cerevisiae (strain ATCC 204508 / S288c) (Baker's yeast).